The chain runs to 428 residues: MSKNIQAIRGMNDILPEQTPLWRYFEKSVAGLLDGYGYRQIRMPIVEFTELFKRSIGEVTDIVEKEMYTFEDRNGDSLTLRPEGTASCVRAVLEHGISGGGQVQKLWYVGPMFRHERPQKGRYRQFHQIGVEVFNLPGPDIDAELIVLTWRLWGLLGLREAVTLELNSLGSSEARARYREALVEYLSARFERLDEDSQRRLSSNPLRILDSKNPETQALLVDAPKLADYLDEDSRQHFEGLKARLDVAGIPYVINPKLVRGLDYYGKTVFEWVTDKLGAQGTVCAGGRYDGLVEQLGGKPTPAVGFAMGVERLVLLLETLERVPAELSRQVDVYFCAFGEAAELAALGLAERLRDALPGLRLAVNAGAGSFKSQLKKADKSGALYALVLGEDELAGRIVGLKSLRAEGEQQSVGWDELGERLAACLRA.

Belongs to the class-II aminoacyl-tRNA synthetase family. In terms of assembly, homodimer.

It localises to the cytoplasm. It catalyses the reaction tRNA(His) + L-histidine + ATP = L-histidyl-tRNA(His) + AMP + diphosphate + H(+). This Azotobacter vinelandii (strain DJ / ATCC BAA-1303) protein is Histidine--tRNA ligase.